We begin with the raw amino-acid sequence, 228 residues long: Ion-translocating oxidoreductase complex subunit E (228 aa).

The next 5 helical transmembrane spans lie at 24–44, 73–93, 95–115, 130–150, and 184–204; these read LLGLCPLLAISGTVVNALGLG, VFVLIIASVVTAIELAMNAFF, ELYLILGIFIPLIVTNCAIIG, LADGLAMGLGFTCVLVALGAL, and GFLLALLPPGAFIALGLLIAL.

Belongs to the NqrDE/RnfAE family. In terms of assembly, the complex is composed of six subunits: RnfA, RnfB, RnfC, RnfD, RnfE and RnfG.

The protein resides in the cell inner membrane. Part of a membrane-bound complex that couples electron transfer with translocation of ions across the membrane. The sequence is that of Ion-translocating oxidoreductase complex subunit E from Thioalkalivibrio sulfidiphilus (strain HL-EbGR7).